A 266-amino-acid polypeptide reads, in one-letter code: Type III pantothenate kinase (266 aa).

ATP is bound at residue 9–16 (DAGNSRIK). Substrate-binding positions include tyrosine 96 and 103–106 (GSDR). Residue aspartate 105 is the Proton acceptor of the active site. Threonine 129 serves as a coordination point for ATP. Threonine 189 contacts substrate.

It belongs to the type III pantothenate kinase family. In terms of assembly, homodimer. NH4(+) serves as cofactor. K(+) is required as a cofactor.

It localises to the cytoplasm. The enzyme catalyses (R)-pantothenate + ATP = (R)-4'-phosphopantothenate + ADP + H(+). Its pathway is cofactor biosynthesis; coenzyme A biosynthesis; CoA from (R)-pantothenate: step 1/5. Functionally, catalyzes the phosphorylation of pantothenate (Pan), the first step in CoA biosynthesis. The sequence is that of Type III pantothenate kinase from Burkholderia cenocepacia (strain ATCC BAA-245 / DSM 16553 / LMG 16656 / NCTC 13227 / J2315 / CF5610) (Burkholderia cepacia (strain J2315)).